A 422-amino-acid chain; its full sequence is Protein king tubby 2 (422 aa).

The segment at 49–169 (PSNPDQIISS…ASGHNDAEGD (121 aa)) is disordered. Residues 57–81 (SSGSPTTVTATGTTTGSVTTTPTSP) are compositionally biased toward low complexity.

It belongs to the TUB family.

The protein localises to the cytoplasm. It localises to the nucleus. The protein is Protein king tubby 2 (king-tubby2) of Culex quinquefasciatus (Southern house mosquito).